Reading from the N-terminus, the 435-residue chain is Zinc finger and BTB domain-containing protein 25 (435 aa).

One can recognise a BTB domain in the interval 1–107 (MDTASHSLVL…GIRFLHADYL (107 aa)). Glycyl lysine isopeptide (Lys-Gly) (interchain with G-Cter in SUMO2) cross-links involve residues K142, K148, K198, and K204. The segment at 238-260 (HLCHYCGERFDSRSNLRQHLHTH) adopts a C2H2-type 1 zinc-finger fold. Glycyl lysine isopeptide (Lys-Gly) (interchain with G-Cter in SUMO2) cross-links involve residues K303 and K330. Residues 349–371 (MSCTICGHKFPRKSQLLEHMYTH) form a C2H2-type 2 zinc finger. K405 participates in a covalent cross-link: Glycyl lysine isopeptide (Lys-Gly) (interchain with G-Cter in SUMO2).

Expressed mainly in hematopoietic cells and testis.

The protein localises to the nucleus. In terms of biological role, may be involved in transcriptional regulation. The polypeptide is Zinc finger and BTB domain-containing protein 25 (ZBTB25) (Homo sapiens (Human)).